The primary structure comprises 219 residues: Interleukin-12 subunit alpha (219 aa).

The first 22 residues, 1–22 (MCPARSLLLVATLVLLDYLSLA), serve as a signal peptide directing secretion. 3 N-linked (GlcNAc...) asparagine glycosylation sites follow: Asn24, Asn93, and Asn107. 3 disulfides stabilise this stretch: Cys37–Cys110, Cys64–Cys196, and Cys85–Cys123.

The protein belongs to the IL-6 superfamily. In terms of assembly, heterodimer with IL12B; disulfide-linked. This heterodimer is known as interleukin IL-12. Heterodimer with EBI3/IL27B; not disulfide-linked. This heterodimer is known as interleukin IL-35. Interacts with NBR1; this interaction promotes IL-12 secretion.

The protein localises to the secreted. Its function is as follows. Heterodimerizes with IL12B to form the IL-12 cytokine or with EBI3/IL27B to form the IL-35 cytokine. IL-12 is primarily produced by professional antigen-presenting cells (APCs) such as B-cells and dendritic cells (DCs) as well as macrophages and granulocytes and regulates T-cell and natural killer-cell responses, induces the production of interferon-gamma (IFN-gamma), favors the differentiation of T-helper 1 (Th1) cells and is an important link between innate resistance and adaptive immunity. Mechanistically, exerts its biological effects through a receptor composed of IL12R1 and IL12R2 subunits. Binding to the receptor results in the rapid tyrosine phosphorylation of a number of cellular substrates including the JAK family kinases TYK2 and JAK2. In turn, recruited STAT4 gets phosphorylated and translocates to the nucleus where it regulates cytokine/growth factor responsive genes. As part of IL-35, plays essential roles in maintaining the immune homeostasis of the liver microenvironment and also functions as an immune-suppressive cytokine. Mediates biological events through unconventional receptors composed of IL12RB2 and gp130/IL6ST heterodimers or homodimers. Signaling requires the transcription factors STAT1 and STAT4, which form a unique heterodimer that binds to distinct DNA sites. This is Interleukin-12 subunit alpha (IL12A) from Cercocebus atys (Sooty mangabey).